A 141-amino-acid chain; its full sequence is Putative pre-16S rRNA nuclease (141 aa).

The protein belongs to the YqgF nuclease family.

The protein localises to the cytoplasm. Functionally, could be a nuclease involved in processing of the 5'-end of pre-16S rRNA. The sequence is that of Putative pre-16S rRNA nuclease from Natranaerobius thermophilus (strain ATCC BAA-1301 / DSM 18059 / JW/NM-WN-LF).